The following is a 179-amino-acid chain: Shikimate kinase (179 aa).

An ATP-binding site is contributed by 15-20 (GAGKTS). A Mg(2+)-binding site is contributed by Thr-19. The substrate site is built by Asp-37, Arg-61, and Gly-83. Position 122 (Arg-122) interacts with ATP. Arg-142 is a binding site for substrate.

Belongs to the shikimate kinase family. As to quaternary structure, monomer. The cofactor is Mg(2+).

Its subcellular location is the cytoplasm. It carries out the reaction shikimate + ATP = 3-phosphoshikimate + ADP + H(+). Its pathway is metabolic intermediate biosynthesis; chorismate biosynthesis; chorismate from D-erythrose 4-phosphate and phosphoenolpyruvate: step 5/7. Its function is as follows. Catalyzes the specific phosphorylation of the 3-hydroxyl group of shikimic acid using ATP as a cosubstrate. This is Shikimate kinase from Coxiella burnetii (strain RSA 331 / Henzerling II).